Reading from the N-terminus, the 389-residue chain is ATP-dependent (S)-NAD(P)H-hydrate dehydratase (389 aa).

The YjeF C-terminal domain occupies 53–389 (TLQLVRNIIP…RGGGRLPQAL (337 aa)). The residue at position 85 (Tyr-85) is a Phosphotyrosine. (6S)-NADPHX-binding positions include Glu-153 and 205-211 (NHMEFSR). Residues 245–249 (KGERD) and 264–273 (GSSRRCGGQG) contribute to the ATP site. Asp-274 serves as a coordination point for (6S)-NADPHX. Disordered regions lie at residues 316 to 350 (KTRA…PGGC) and 369 to 389 (RSLH…PQAL).

The protein belongs to the NnrD/CARKD family. Requires Mg(2+) as cofactor.

The protein localises to the mitochondrion. The enzyme catalyses (6S)-NADHX + ATP = ADP + phosphate + NADH + H(+). It catalyses the reaction (6S)-NADPHX + ATP = ADP + phosphate + NADPH + H(+). In terms of biological role, catalyzes the dehydration of the S-form of NAD(P)HX at the expense of ATP, which is converted to ADP. Together with NAD(P)HX epimerase, which catalyzes the epimerization of the S- and R-forms, the enzyme allows the repair of both epimers of NAD(P)HX, a damaged form of NAD(P)H that is a result of enzymatic or heat-dependent hydration. In Macaca mulatta (Rhesus macaque), this protein is ATP-dependent (S)-NAD(P)H-hydrate dehydratase.